A 1070-amino-acid chain; its full sequence is DNA-directed RNA polymerase subunit beta (1070 aa).

The protein belongs to the RNA polymerase beta chain family. In terms of assembly, in plastids the minimal PEP RNA polymerase catalytic core is composed of four subunits: alpha, beta, beta', and beta''. When a (nuclear-encoded) sigma factor is associated with the core the holoenzyme is formed, which can initiate transcription.

The protein localises to the plastid. Its subcellular location is the chloroplast. The enzyme catalyses RNA(n) + a ribonucleoside 5'-triphosphate = RNA(n+1) + diphosphate. In terms of biological role, DNA-dependent RNA polymerase catalyzes the transcription of DNA into RNA using the four ribonucleoside triphosphates as substrates. This Buxus microphylla (Littleleaf boxwood) protein is DNA-directed RNA polymerase subunit beta.